Reading from the N-terminus, the 353-residue chain is tRNA-specific 2-thiouridylase MnmA 2 (353 aa).

Residues Ala9–Ser16 and Met35 contribute to the ATP site. Residue Cys98 is the Nucleophile of the active site. Cys98 and Cys194 form a disulfide bridge. ATP is bound at residue Gly122. An interaction with tRNA region spans residues Lys144 to Gln146. Residue Cys194 is the Cysteine persulfide intermediate of the active site. The interaction with tRNA stretch occupies residues Arg300–Tyr301.

The protein belongs to the MnmA/TRMU family.

The protein localises to the cytoplasm. The catalysed reaction is S-sulfanyl-L-cysteinyl-[protein] + uridine(34) in tRNA + AH2 + ATP = 2-thiouridine(34) in tRNA + L-cysteinyl-[protein] + A + AMP + diphosphate + H(+). In terms of biological role, catalyzes the 2-thiolation of uridine at the wobble position (U34) of tRNA, leading to the formation of s(2)U34. In Clostridium botulinum (strain ATCC 19397 / Type A), this protein is tRNA-specific 2-thiouridylase MnmA 2.